A 165-amino-acid polypeptide reads, in one-letter code: NADPH-dependent 7-cyano-7-deazaguanine reductase (165 aa).

The active-site Thioimide intermediate is the C56. The active-site Proton donor is the D63. Residues 78-80 and 97-98 contribute to the substrate site; these read VES and HE.

It belongs to the GTP cyclohydrolase I family. QueF type 1 subfamily.

The protein resides in the cytoplasm. The catalysed reaction is 7-aminomethyl-7-carbaguanine + 2 NADP(+) = 7-cyano-7-deazaguanine + 2 NADPH + 3 H(+). It functions in the pathway tRNA modification; tRNA-queuosine biosynthesis. In terms of biological role, catalyzes the NADPH-dependent reduction of 7-cyano-7-deazaguanine (preQ0) to 7-aminomethyl-7-deazaguanine (preQ1). This is NADPH-dependent 7-cyano-7-deazaguanine reductase from Bacillus mycoides (strain KBAB4) (Bacillus weihenstephanensis).